The following is a 683-amino-acid chain: Cytochrome P450 monooxygenase htyF (683 aa).

The chain crosses the membrane as a helical span at residues 8–28; sequence PALLAASVVLAVSLVSYVIQL. Residue Asn-29 is glycosylated (N-linked (GlcNAc...) asparagine). Heme is bound at residue Cys-481. N-linked (GlcNAc...) asparagine glycosylation occurs at Asn-581. The chain crosses the membrane as a helical span at residues 588 to 608; that stretch reads LYVFVVLVACVAALFIGIGIY.

It belongs to the cytochrome P450 family. It depends on heme as a cofactor.

Its subcellular location is the membrane. It participates in antifungal biosynthesis. Cytochrome P450 monooxygenase; part of the gene cluster that mediates the de novo generation of L-homotyrosine from acetyl-CoA and 4-hydroxyphenyl-pyruvate. L-homotyrosine is a building block of echinocandin B, a fungal lipidated cyclic hexapeptide that acts as an antifungal agent. L-homotyrosine 4-hydroxyphenyl-pyruvate first undergoes an aldol-type condensation by htyA with the C-2 of acetyl-CoA followed by the release of CoA to form 2-(4-hydroxybenzyl)-malate. This is followed by isomerization of 2-(4-hydroxy-benzyl)-malate to 3-(4-hydroxybenzyl)-malate by htyD. Thereafter, 3-(4-hydroxybenzyl)-malate undergoes decarboxylation and oxidation to form 2-oxo-4-(4-hydroxybenzyl)butanoic acid, coupled to reduction of NAD(+) to NADH by htyC. The product then undergoes transamination catalyzed by htyB to form L-homotyrosine. The sequence is that of Cytochrome P450 monooxygenase htyF from Aspergillus rugulosus (Emericella rugulosa).